A 292-amino-acid polypeptide reads, in one-letter code: UDP-3-O-acyl-N-acetylglucosamine deacetylase (292 aa).

Residues His76, His232, and Asp236 each contribute to the Zn(2+) site. His259 (proton donor) is an active-site residue.

This sequence belongs to the LpxC family. The cofactor is Zn(2+).

It carries out the reaction a UDP-3-O-[(3R)-3-hydroxyacyl]-N-acetyl-alpha-D-glucosamine + H2O = a UDP-3-O-[(3R)-3-hydroxyacyl]-alpha-D-glucosamine + acetate. It participates in glycolipid biosynthesis; lipid IV(A) biosynthesis; lipid IV(A) from (3R)-3-hydroxytetradecanoyl-[acyl-carrier-protein] and UDP-N-acetyl-alpha-D-glucosamine: step 2/6. Catalyzes the hydrolysis of UDP-3-O-myristoyl-N-acetylglucosamine to form UDP-3-O-myristoylglucosamine and acetate, the committed step in lipid A biosynthesis. The chain is UDP-3-O-acyl-N-acetylglucosamine deacetylase from Thermodesulfovibrio yellowstonii (strain ATCC 51303 / DSM 11347 / YP87).